The chain runs to 277 residues: Glutamate racemase (277 aa).

Residues 9-10 and 41-42 each bind substrate; these read DS and YG. Cys73 functions as the Proton donor/acceptor in the catalytic mechanism. 74–75 is a substrate binding site; that stretch reads NT. The active-site Proton donor/acceptor is the Cys183. 184 to 185 serves as a coordination point for substrate; that stretch reads TH.

It belongs to the aspartate/glutamate racemases family.

The catalysed reaction is L-glutamate = D-glutamate. It functions in the pathway cell wall biogenesis; peptidoglycan biosynthesis. Its function is as follows. Provides the (R)-glutamate required for cell wall biosynthesis. The chain is Glutamate racemase from Shewanella denitrificans (strain OS217 / ATCC BAA-1090 / DSM 15013).